The sequence spans 367 residues: Alginate lyase (367 aa).

Positions 1–27 (MKTSHLIRIALPGALAAALLASQVSQA) are cleaved as a signal peptide. Residues 65 to 66 (SK), 138 to 139 (HT), and tyrosine 256 each bind substrate.

The protein belongs to the polysaccharide lyase 5 family.

The protein resides in the periplasm. The enzyme catalyses Eliminative cleavage of alginate to give oligosaccharides with 4-deoxy-alpha-L-erythro-hex-4-enuronosyl groups at their non-reducing ends and beta-D-mannuronate at their reducing end.. Catalyzes the depolymerization of alginate by cleaving the beta-1,4 glycosidic bond between two adjacent sugar residues via a beta-elimination mechanism. May serve to degrade mislocalized alginate that is trapped in the periplasmic space. Acts preferentially on non-acetylated alginate or its precursor mannuronan. Is able to catalyze cleavage adjacent to either mannuronate or guluronate residues in alginate. Exhaustive digestion of alginate by AlgL generates dimeric and trimeric products. In addition to its enzymatic function, AlgL appears to be required for alginate export, maybe as part of a multi-protein alginate-secretion complex. This is Alginate lyase from Pseudomonas aeruginosa (strain ATCC 15692 / DSM 22644 / CIP 104116 / JCM 14847 / LMG 12228 / 1C / PRS 101 / PAO1).